We begin with the raw amino-acid sequence, 121 residues long: Basic phospholipase A2 BbTX-III (121 aa).

Ca(2+) is bound by residues Y27, G29, and G31. Intrachain disulfides connect C28–C44, C43–C95, C49–C121, C50–C88, C58–C82, and C76–C86. Residue H47 is part of the active site. A Ca(2+)-binding site is contributed by D48. D89 is an active-site residue.

Belongs to the phospholipase A2 family. Group II subfamily. D49 sub-subfamily. As to quaternary structure, homodimer; non-covalently linked. It depends on Ca(2+) as a cofactor. Expressed by the venom gland.

It localises to the secreted. The catalysed reaction is a 1,2-diacyl-sn-glycero-3-phosphocholine + H2O = a 1-acyl-sn-glycero-3-phosphocholine + a fatty acid + H(+). Its function is as follows. Snake venom phospholipase A2 (PLA2) that exhibits myotoxin and anticoagulant activity. Displays edema-inducing activities in mouse paw. Also displays cytotoxic activity against some cell lines and myotubes, and antimicrobial activities against E.coli, C.albicans and Leishmania. PLA2 catalyzes the calcium-dependent hydrolysis of the 2-acyl groups in 3-sn-phosphoglycerides. The chain is Basic phospholipase A2 BbTX-III from Bothrops brazili (Brazil's lancehead).